The sequence spans 420 residues: Glucose-1-phosphate adenylyltransferase (420 aa).

Residues Y107, G172, 187 to 188 (EK), and S205 each bind alpha-D-glucose 1-phosphate.

The protein belongs to the bacterial/plant glucose-1-phosphate adenylyltransferase family. As to quaternary structure, homotetramer.

The enzyme catalyses alpha-D-glucose 1-phosphate + ATP + H(+) = ADP-alpha-D-glucose + diphosphate. The protein operates within glycan biosynthesis; glycogen biosynthesis. In terms of biological role, involved in the biosynthesis of ADP-glucose, a building block required for the elongation reactions to produce glycogen. Catalyzes the reaction between ATP and alpha-D-glucose 1-phosphate (G1P) to produce pyrophosphate and ADP-Glc. This chain is Glucose-1-phosphate adenylyltransferase, found in Rhodopseudomonas palustris (strain ATCC BAA-98 / CGA009).